The following is a 441-amino-acid chain: ATP-dependent protease ATPase subunit HslU (441 aa).

Residues I18, 60 to 65, D254, E319, and R391 each bind ATP; that span reads GVGKTE.

Belongs to the ClpX chaperone family. HslU subfamily. As to quaternary structure, a double ring-shaped homohexamer of HslV is capped on each side by a ring-shaped HslU homohexamer. The assembly of the HslU/HslV complex is dependent on binding of ATP.

Its subcellular location is the cytoplasm. In terms of biological role, ATPase subunit of a proteasome-like degradation complex; this subunit has chaperone activity. The binding of ATP and its subsequent hydrolysis by HslU are essential for unfolding of protein substrates subsequently hydrolyzed by HslV. HslU recognizes the N-terminal part of its protein substrates and unfolds these before they are guided to HslV for hydrolysis. The protein is ATP-dependent protease ATPase subunit HslU of Shewanella frigidimarina (strain NCIMB 400).